Consider the following 204-residue polypeptide: Putative 3-methyladenine DNA glycosylase (204 aa).

The protein belongs to the DNA glycosylase MPG family.

This Bacillus cytotoxicus (strain DSM 22905 / CIP 110041 / 391-98 / NVH 391-98) protein is Putative 3-methyladenine DNA glycosylase.